Reading from the N-terminus, the 349-residue chain is Sterol-4-alpha-carboxylate 3-dehydrogenase ERG26, decarboxylating (349 aa).

NADP(+) contacts are provided by residues 11-17 (GGSGFLG), 62-63 (DL), and 84-86 (CAS). Positions 124 and 151 each coordinate substrate. NADP(+)-binding positions include Y151, K155, and 179 to 182 (PAGI). K155 serves as the catalytic Proton donor.

The protein belongs to the 3-beta-HSD family. As to quaternary structure, heterotetramer of ERG25, ERG26, ERG27 and ERG28. ERG28 acts as a scaffold to tether ERG27 and other 4,4-demethylation-related enzymes, forming a demethylation enzyme complex, in the endoplasmic reticulum.

The protein resides in the endoplasmic reticulum membrane. The enzyme catalyses 4beta-methylzymosterol-4alpha-carboxylate + NADP(+) = 3-dehydro-4-methylzymosterol + CO2 + NADPH. It participates in steroid biosynthesis; zymosterol biosynthesis; zymosterol from lanosterol: step 4/6. With respect to regulation, inhibited by FR171456, a natural product with broad antifungal activity. Functionally, sterol-4-alpha-carboxylate 3-dehydrogenase; part of the third module of ergosterol biosynthesis pathway that includes the late steps of the pathway. ERG26 is a catalytic component of the C-4 demethylation complex that catalyzes the oxidative decarboxylation that results in a reduction of the 3-beta-hydroxy group at the C-3 carbon to an oxo group. The third module or late pathway involves the ergosterol synthesis itself through consecutive reactions that mainly occur in the endoplasmic reticulum (ER) membrane. Firstly, the squalene synthase ERG9 catalyzes the condensation of 2 farnesyl pyrophosphate moieties to form squalene, which is the precursor of all steroids. Squalene synthase is crucial for balancing the incorporation of farnesyl diphosphate (FPP) into sterol and nonsterol isoprene synthesis. Secondly, the squalene epoxidase ERG1 catalyzes the stereospecific oxidation of squalene to (S)-2,3-epoxysqualene, which is considered to be a rate-limiting enzyme in steroid biosynthesis. Then, the lanosterol synthase ERG7 catalyzes the cyclization of (S)-2,3 oxidosqualene to lanosterol, a reaction that forms the sterol core. In the next steps, lanosterol is transformed to zymosterol through a complex process involving various demethylation, reduction and desaturation reactions. The lanosterol 14-alpha-demethylase ERG11 (also known as CYP51) catalyzes C14-demethylation of lanosterol to produce 4,4'-dimethyl cholesta-8,14,24-triene-3-beta-ol, which is critical for ergosterol biosynthesis. The C-14 reductase ERG24 reduces the C14=C15 double bond of 4,4-dimethyl-cholesta-8,14,24-trienol to produce 4,4-dimethyl-cholesta-8,24-dienol. 4,4-dimethyl-cholesta-8,24-dienol is substrate of the C-4 demethylation complex ERG25-ERG26-ERG27 in which ERG25 catalyzes the three-step monooxygenation required for the demethylation of 4,4-dimethyl and 4alpha-methylsterols, ERG26 catalyzes the oxidative decarboxylation that results in a reduction of the 3-beta-hydroxy group at the C-3 carbon to an oxo group, and ERG27 is responsible for the reduction of the keto group on the C-3. ERG28 has a role as a scaffold to help anchor ERG25, ERG26 and ERG27 to the endoplasmic reticulum and ERG29 regulates the activity of the iron-containing C4-methylsterol oxidase ERG25. Then, the sterol 24-C-methyltransferase ERG6 catalyzes the methyl transfer from S-adenosyl-methionine to the C-24 of zymosterol to form fecosterol. The C-8 sterol isomerase ERG2 catalyzes the reaction which results in unsaturation at C-7 in the B ring of sterols and thus converts fecosterol to episterol. The sterol-C5-desaturase ERG3 then catalyzes the introduction of a C-5 double bond in the B ring to produce 5-dehydroepisterol. The C-22 sterol desaturase ERG5 further converts 5-dehydroepisterol into ergosta-5,7,22,24(28)-tetraen-3beta-ol by forming the C-22(23) double bond in the sterol side chain. Finally, ergosta-5,7,22,24(28)-tetraen-3beta-ol is substrate of the C-24(28) sterol reductase ERG4 to produce ergosterol. The protein is Sterol-4-alpha-carboxylate 3-dehydrogenase ERG26, decarboxylating of Saccharomyces cerevisiae (strain ATCC 204508 / S288c) (Baker's yeast).